Consider the following 136-residue polypeptide: Small ribosomal subunit protein uS8c (136 aa).

It belongs to the universal ribosomal protein uS8 family. As to quaternary structure, part of the 30S ribosomal subunit.

The protein resides in the plastid. The protein localises to the chloroplast. In terms of biological role, one of the primary rRNA binding proteins, it binds directly to 16S rRNA central domain where it helps coordinate assembly of the platform of the 30S subunit. The protein is Small ribosomal subunit protein uS8c (rps8) of Oryza sativa subsp. indica (Rice).